The primary structure comprises 372 residues: Sulfate/thiosulfate import ATP-binding protein CysA (372 aa).

The ABC transporter domain maps to 3-237 (IQVQHVTKRF…PATPFVYGFL (235 aa)). An ATP-binding site is contributed by 35-42 (GPSGCGKT).

Belongs to the ABC transporter superfamily. Sulfate/tungstate importer (TC 3.A.1.6) family. The complex is composed of two ATP-binding proteins (CysA), two transmembrane proteins (CysT and CysW) and a solute-binding protein (CysP).

It localises to the cell inner membrane. It catalyses the reaction sulfate(out) + ATP + H2O = sulfate(in) + ADP + phosphate + H(+). It carries out the reaction thiosulfate(out) + ATP + H2O = thiosulfate(in) + ADP + phosphate + H(+). In terms of biological role, part of the ABC transporter complex CysAWTP involved in sulfate/thiosulfate import. Responsible for energy coupling to the transport system. The polypeptide is Sulfate/thiosulfate import ATP-binding protein CysA (Ralstonia nicotianae (strain ATCC BAA-1114 / GMI1000) (Ralstonia solanacearum)).